A 200-amino-acid polypeptide reads, in one-letter code: Ciliary neurotrophic factor (200 aa).

It belongs to the CNTF family. In terms of assembly, homodimer. As to expression, nervous system.

The protein resides in the cytoplasm. CNTF is a survival factor for various neuronal cell types. Seems to prevent the degeneration of motor axons after axotomy. The sequence is that of Ciliary neurotrophic factor (CNTF) from Homo sapiens (Human).